We begin with the raw amino-acid sequence, 396 residues long: Major capsid protein (396 aa).

This sequence belongs to the NCLDV major capsid protein family.

The protein localises to the virion. Its function is as follows. Major protein of the capsid. This chain is Major capsid protein (MCP), found in Pyramimonas plurioculata (PoV01).